The primary structure comprises 3460 residues: Reelin (3460 aa).

The first 25 residues, methionine 1 to alanine 25, serve as a signal peptide directing secretion. In terms of domain architecture, Reelin spans alanine 26–proline 190. Cysteine 40 and cysteine 126 are disulfide-bonded. N-linked (GlcNAc...) asparagine glycosylation occurs at asparagine 140. The cysteines at positions 154 and 178 are disulfide-linked. N-linked (GlcNAc...) asparagine glycans are attached at residues asparagine 257, asparagine 289, and asparagine 305. A disulfide bridge connects residues cysteine 539 and cysteine 580. Residues glutamate 592–leucine 603 form a BNR 1 repeat. Cysteines 608 and 613 form a disulfide. Asparagine 628 is a glycosylation site (N-linked (GlcNAc...) asparagine). One can recognise an EGF-like 1 domain in the interval isoleucine 670–glutamate 701. 2 cysteine pairs are disulfide-bonded: cysteine 674/cysteine 684 and cysteine 691/cysteine 700. One copy of the BNR 2 repeat lies at histidine 798–leucine 809. A disulfide bond links cysteine 894 and cysteine 936. A BNR 3 repeat occupies glutamate 951–leucine 962. Disulfide bonds link cysteine 967/cysteine 974, cysteine 1033/cysteine 1043, and cysteine 1050/cysteine 1059. The EGF-like 2 domain maps to isoleucine 1029–histidine 1060. The BNR 4 repeat unit spans residues glutamine 1156–leucine 1167. Asparagine 1266 carries N-linked (GlcNAc...) asparagine glycosylation. Residues cysteine 1270 and cysteine 1309 are joined by a disulfide bond. A BNR 5 repeat occupies glutamine 1322–leucine 1333. A disulfide bridge links cysteine 1338 with cysteine 1347. The region spanning isoleucine 1408–valine 1441 is the EGF-like 3 domain. One copy of the BNR 6 repeat lies at glutamine 1534–leucine 1545. N-linked (GlcNAc...) asparagine glycosylation is present at asparagine 1599. Residues cysteine 1632 and cysteine 1672 are joined by a disulfide bond. The BNR 7 repeat unit spans residues glutamine 1685 to leucine 1696. Cysteine 1701 and cysteine 1708 are joined by a disulfide. N-linked (GlcNAc...) asparagine glycosylation is present at asparagine 1749. In terms of domain architecture, EGF-like 4 spans leucine 1764–valine 1795. The stretch at glutamine 1883 to leucine 1894 is one BNR 8 repeat. The N-linked (GlcNAc...) asparagine glycan is linked to asparagine 1920. One copy of the BNR 9 repeat lies at glutamate 2042–leucine 2053. Zn(2+)-binding residues include histidine 2060 and histidine 2073. The 33-residue stretch at isoleucine 2128–lysine 2160 folds into the EGF-like 5 domain. Disulfide bonds link cysteine 2132–cysteine 2142, cysteine 2136–cysteine 2148, and cysteine 2150–cysteine 2159. Asparagine 2144 carries N-linked (GlcNAc...) asparagine glycosylation. Zn(2+) is bound at residue glutamate 2178. Cysteine 2194 and cysteine 2234 are oxidised to a cystine. The stretch at glutamine 2249–leucine 2260 is one BNR 10 repeat. Glutamate 2263 contributes to the Zn(2+) binding site. N-linked (GlcNAc...) asparagine glycans are attached at residues asparagine 2268 and asparagine 2316. 3 disulfide bridges follow: cysteine 2347–cysteine 2386, cysteine 2392–cysteine 2558, and cysteine 2543–cysteine 2583. Glutamate 2396, glutamate 2398, and histidine 2459 together coordinate Zn(2+). A BNR 11 repeat occupies glutamate 2398 to proline 2409. The 32-residue stretch at isoleucine 2477 to aspartate 2508 folds into the EGF-like 6 domain. An N-linked (GlcNAc...) asparagine glycan is attached at asparagine 2568. 2 BNR repeats span residues glutamate 2597 to leucine 2608 and glutamine 2777 to tyrosine 2788. Disulfide bonds link cysteine 2793–cysteine 2800, cysteine 2856–cysteine 2866, cysteine 2860–cysteine 2871, cysteine 2873–cysteine 2882, and cysteine 2918–cysteine 2965. An EGF-like 7 domain is found at leucine 2852 to tyrosine 2883. N-linked (GlcNAc...) asparagine glycosylation occurs at asparagine 2961. One copy of the BNR 14 repeat lies at aspartate 2978–leucine 2989. 2 N-linked (GlcNAc...) asparagine glycosylation sites follow: asparagine 3015 and asparagine 3072. The stretch at glutamate 3142–leucine 3154 is one BNR 15 repeat. A disulfide bond links cysteine 3159 and cysteine 3169. A glycan (N-linked (GlcNAc...) asparagine) is linked at asparagine 3184. In terms of domain architecture, EGF-like 8 spans isoleucine 3227–serine 3259. Cystine bridges form between cysteine 3231–cysteine 3241, cysteine 3235–cysteine 3247, cysteine 3249–cysteine 3258, and cysteine 3295–cysteine 3345. One copy of the BNR 16 repeat lies at glutamine 3362–valine 3373. Residues asparagine 3411 and asparagine 3438 are each glycosylated (N-linked (GlcNAc...) asparagine).

It belongs to the reelin family. Oligomer of disulfide-linked homodimers. In terms of processing, N-glycosylated and to a lesser extent also O-glycosylated. In terms of tissue distribution, abundantly produced during brain ontogenesis by the Cajal-Retzius cells and other pioneer neurons located in the telencephalic marginal zone and by granule cells of the external granular layer of the cerebellum. In adult brain, preferentially expressed in GABAergic interneurons of prefrontal cortices, temporal cortex, hippocampus and glutamatergic granule cells of cerebellum. Expression is reduced to about 50% in patients with schizophrenia. Also expressed in fetal and adult liver.

The protein localises to the secreted. It is found in the extracellular space. Its subcellular location is the extracellular matrix. Functionally, extracellular matrix serine protease secreted by pioneer neurons that plays a role in layering of neurons in the cerebral cortex and cerebellum by coordinating cell positioning during neurodevelopment. Regulates microtubule function in neurons and neuronal migration. Binding to the extracellular domains of lipoprotein receptors VLDLR and LRP8/APOER2 induces tyrosine phosphorylation of DAB1 and modulation of TAU phosphorylation. Affects migration of sympathetic preganglionic neurons in the spinal cord, where it seems to act as a barrier to neuronal migration. Enzymatic activity is important for the modulation of cell adhesion. This chain is Reelin (RELN), found in Homo sapiens (Human).